A 445-amino-acid polypeptide reads, in one-letter code: Methionine aminopeptidase 2-2 (445 aa).

The tract at residues 1-92 is disordered; that stretch reads MAAQASEDLK…RVPISQLFPN (92 aa). Residues 18 to 33 are compositionally biased toward low complexity; the sequence is AGDSKAAAATAGQAEA. A compositionally biased stretch (acidic residues) spans 34–46; it reads GEAEDDSDDDEVD. A compositionally biased stretch (low complexity) spans 47 to 58; the sequence is GNAAPEGAASGA. Basic residues predominate over residues 59–74; the sequence is AKKKKKRKPKKKKKGG. H198 contacts substrate. A divalent metal cation contacts are provided by D218, D229, and H298. Substrate is bound at residue H306. 2 residues coordinate a divalent metal cation: E331 and E426.

This sequence belongs to the peptidase M24A family. Methionine aminopeptidase eukaryotic type 2 subfamily. Co(2+) serves as cofactor. Requires Zn(2+) as cofactor. The cofactor is Mn(2+). It depends on Fe(2+) as a cofactor.

It is found in the cytoplasm. The enzyme catalyses Release of N-terminal amino acids, preferentially methionine, from peptides and arylamides.. Its function is as follows. Cotranslationally removes the N-terminal methionine from nascent proteins. The N-terminal methionine is often cleaved when the second residue in the primary sequence is small and uncharged (Met-Ala-, Cys, Gly, Pro, Ser, Thr, or Val). This chain is Methionine aminopeptidase 2-2, found in Aspergillus terreus (strain NIH 2624 / FGSC A1156).